Reading from the N-terminus, the 380-residue chain is Chorismate synthase (380 aa).

Arg-48 is a binding site for NADP(+). FMN contacts are provided by residues 126-128, Gly-300, 315-319, and Arg-342; these read HFS and KPISS.

It belongs to the chorismate synthase family. Homotetramer. Requires FMNH2 as cofactor.

It catalyses the reaction 5-O-(1-carboxyvinyl)-3-phosphoshikimate = chorismate + phosphate. Its pathway is metabolic intermediate biosynthesis; chorismate biosynthesis; chorismate from D-erythrose 4-phosphate and phosphoenolpyruvate: step 7/7. Functionally, catalyzes the anti-1,4-elimination of the C-3 phosphate and the C-6 proR hydrogen from 5-enolpyruvylshikimate-3-phosphate (EPSP) to yield chorismate, which is the branch point compound that serves as the starting substrate for the three terminal pathways of aromatic amino acid biosynthesis. This reaction introduces a second double bond into the aromatic ring system. This chain is Chorismate synthase, found in Lancefieldella parvula (strain ATCC 33793 / DSM 20469 / CCUG 32760 / JCM 10300 / KCTC 3663 / VPI 0546 / 1246) (Atopobium parvulum).